The primary structure comprises 515 residues: Bifunctional purine biosynthesis protein PurH (515 aa).

In terms of domain architecture, MGS-like spans 1-145 (MTKRVLISVS…KNHASVTVVV (145 aa)).

Belongs to the PurH family.

It catalyses the reaction (6R)-10-formyltetrahydrofolate + 5-amino-1-(5-phospho-beta-D-ribosyl)imidazole-4-carboxamide = 5-formamido-1-(5-phospho-D-ribosyl)imidazole-4-carboxamide + (6S)-5,6,7,8-tetrahydrofolate. The enzyme catalyses IMP + H2O = 5-formamido-1-(5-phospho-D-ribosyl)imidazole-4-carboxamide. It participates in purine metabolism; IMP biosynthesis via de novo pathway; 5-formamido-1-(5-phospho-D-ribosyl)imidazole-4-carboxamide from 5-amino-1-(5-phospho-D-ribosyl)imidazole-4-carboxamide (10-formyl THF route): step 1/1. It functions in the pathway purine metabolism; IMP biosynthesis via de novo pathway; IMP from 5-formamido-1-(5-phospho-D-ribosyl)imidazole-4-carboxamide: step 1/1. This Streptococcus pneumoniae (strain P1031) protein is Bifunctional purine biosynthesis protein PurH.